The chain runs to 233 residues: Large ribosomal subunit protein uL1 (233 aa).

Belongs to the universal ribosomal protein uL1 family. Part of the 50S ribosomal subunit.

In terms of biological role, binds directly to 23S rRNA. The L1 stalk is quite mobile in the ribosome, and is involved in E site tRNA release. Protein L1 is also a translational repressor protein, it controls the translation of the L11 operon by binding to its mRNA. The protein is Large ribosomal subunit protein uL1 of Nautilia profundicola (strain ATCC BAA-1463 / DSM 18972 / AmH).